We begin with the raw amino-acid sequence, 143 residues long: MASCSQHLLSAVAIFSVLAGVATATSIYTCYEGMGLPVNPLQGCRFYVASQTCGAVPLLPIEVMKDWCCRELAGISSNCRCEGLRVFIDRAFPPSQSQGAPPQLPPLATECPAEVKRDFARTLALPGQCNLPAIHGGAYCVFP.

The signal sequence occupies residues 1–24 (MASCSQHLLSAVAIFSVLAGVATA).

It belongs to the protease inhibitor I6 (cereal trypsin/alpha-amylase inhibitor) family. Endosperm.

It is found in the secreted. Functionally, trypsin inhibitor. No alpha-amylase inhibition detected. The chain is Trypsin inhibitor CMc (ITR2) from Hordeum vulgare (Barley).